A 2663-amino-acid chain; its full sequence is Ankyrin repeat domain-containing protein 11 (2663 aa).

Disordered stretches follow at residues 1–90 and 128–169; these read MPKG…KEPV and SANS…ERGE. Basic and acidic residues-rich tracts occupy residues 21–54 and 69–90; these read MVEKQTGKKDKDKVSLTKTPKLERGDGGKEVRER and EQKDSDTEKQGPERKRIKKEPV. Polar residues predominate over residues 128–155; it reads SANSPVDTTPKHPSQSTVCQKGTPNSAS. Positions 156 to 169 are enriched in basic and acidic residues; it reads KTKDKVNKRNERGE. ANK repeat units follow at residues 167–196, 200–229, 233–262, and 266–292; these read RGETRLHRAAIRGDARRIKELISEGADVNV, AGWTALHEACNRGYYDVAKQLLAAGAEVNT, DDDTPLHDAANNGHYKVVKLLLRYGGNPQQ, and KGETPLKVANSPTMVNLLLGKGTYTSS. Residue S276 is modified to Phosphoserine. 3 disordered regions span residues 289–380, 398–647, and 723–783; these read YTSS…SNSF, APKK…GQCS, and DTNK…NDLK. The segment covering 295 to 305 has biased composition (acidic residues); the sequence is SSTESSEEEDA. Polar residues predominate over residues 309–320; sequence APSSSVDGNNTD. Over residues 356 to 376 the composition is skewed to basic and acidic residues; sequence DRVPPVDDKHLLKKDYRKETK. Position 408 is a phosphoserine (S408). T410 carries the post-translational modification Phosphothreonine. S411 carries the post-translational modification Phosphoserine. Residues 438 to 451 are compositionally biased toward basic and acidic residues; the sequence is KTREPSNAKQQKEK. Positions 452–462 are enriched in basic residues; that stretch reads NKVKKKRKKET. The span at 463-477 shows a compositional bias: basic and acidic residues; the sequence is KGREVRFGKRSDKFC. Acidic residues predominate over residues 481–493; sequence SESESSESGEDDR. The span at 513–531 shows a compositional bias: low complexity; the sequence is SLFSSLSASSTSSHGSSAA. A compositionally biased stretch (basic and acidic residues) spans 539-550; it reads TDQHTKHWRTDN. Polar residues predominate over residues 551 to 562; that stretch reads WKTISSPAWSEV. Positions 576 to 588 are enriched in low complexity; that stretch reads ESDYSSEGSSVES. 2 stretches are compositionally biased toward basic residues: residues 591–602 and 629–641; these read PVRKRQEHRKRA and VKKHKTKHKHKNK. Residue S834 is modified to Phosphoserine. Basic and acidic residues-rich tracts occupy residues 881–928, 935–1043, 1059–1090, and 1099–1112; these read VKED…EKHK, SEKD…KSIL, KKDTKEKHKDTHGKDKERKASLDQGKEKKEKA, and FSEKKDDKKGKEKS. Disordered stretches follow at residues 881 to 1043 and 1059 to 1393; these read VKED…KSIL and KKDT…GQYE. Position 1079 is a phosphoserine (S1079). At T1120 the chain carries Phosphothreonine. S1123 bears the Phosphoserine mark. 3 stretches are compositionally biased toward basic and acidic residues: residues 1142–1301, 1330–1347, and 1359–1393; these read DLPR…DKIS, GDDKPRESACLPEKLKEK, and KSHDRERAKKEKAEKKEKGEDYKEGGSRKDSGQYE. A Phosphothreonine modification is found at T1419. Composition is skewed to basic and acidic residues over residues 1424–1446, 1466–1545, 1556–1574, 1587–1597, and 1605–1639; these read STEKKDKNDSEREPSKKIEKELK, REKW…KGDP, APSKDPGKKDARPREKLLG, LSQKDLEIEER, and MKQMEKLRHRSGDPKLKEKAKPADDGRKKGLDIPA. A disordered region spans residues 1424–1710; it reads STEKKDKNDS…TGVPTPTSVL (287 aa). Residue S1509 is modified to Phosphoserine. Phosphoserine is present on S1692. Over residues 1698–1710 the composition is skewed to polar residues; that stretch reads SRPTGVPTPTSVL. At S1792 the chain carries Phosphoserine. The segment at 1814–1836 is disordered; that stretch reads SVPAASSYDSPMPPSMEDRAPLP. Residue S1847 is modified to Phosphoserine. Phosphotyrosine occurs at positions 1850 and 1851. Phosphoserine occurs at positions 1852, 1859, and 1990. Disordered stretches follow at residues 1988–2019 and 2131–2406; these read PESPKRFCPADPLHSAAPGPFSASEAPYPAPP and LDLG…STQQ. 2 stretches are compositionally biased toward low complexity: residues 2310 to 2324 and 2391 to 2406; these read IQPEAAEPKPTAEAP and RSTQQLQQQLNTSTQQ. The segment at 2369–2663 is important for protein degradation; sequence AKARGSEDDD…VNDDFVLLPA (295 aa).

As to quaternary structure, interacts with the PAS region of the p160 coactivators. Post-translationally, subject to proteasomal degradation which is probably essential to regulate its activity.

It localises to the nucleus. Chromatin regulator which modulates histone acetylation and gene expression in neural precursor cells. May recruit histone deacetylases (HDACs) to the p160 coactivators/nuclear receptor complex to inhibit ligand-dependent transactivation. Has a role in proliferation and development of cortical neural precursors. May also regulate bone homeostasis. This is Ankyrin repeat domain-containing protein 11 (ANKRD11) from Homo sapiens (Human).